A 215-amino-acid polypeptide reads, in one-letter code: UPF0502 protein Gbem_0102 (215 aa).

The protein belongs to the UPF0502 family.

The sequence is that of UPF0502 protein Gbem_0102 from Citrifermentans bemidjiense (strain ATCC BAA-1014 / DSM 16622 / JCM 12645 / Bem) (Geobacter bemidjiensis).